Consider the following 549-residue polypeptide: Phosphoenolpyruvate carboxykinase (ATP) (549 aa).

250–257 (GLSGTGKT) serves as a coordination point for ATP.

Belongs to the phosphoenolpyruvate carboxykinase (ATP) family. In terms of assembly, homotetramer.

The enzyme catalyses oxaloacetate + ATP = phosphoenolpyruvate + ADP + CO2. The protein operates within carbohydrate biosynthesis; gluconeogenesis. The protein is Phosphoenolpyruvate carboxykinase (ATP) (PCK1) of Saccharomyces cerevisiae (strain ATCC 204508 / S288c) (Baker's yeast).